The primary structure comprises 300 residues: MKTGNQFNTVALVGRSNTPGIAEPLTTLAGCIAKLGFEVVFEVDTAREIGISGYPALTPAEIGARADVAVVLGGDGTMLGIGRQLAPYKTPLIGINHGRLGFITDIAAADMQARVPVILSGKFEREERSLLEARIVRDGEPIYHALAFNDVVVNRSGFSGMVELRASVDGRFMYNQRSDGLIVATPTGSTAYALSSAGPILHPQLQGIVLVPIAPHALSNRPIVLPDDSKIAIQIVGGRDVNVNFDMQSFTALELNDTIEVRRSKHTVPFLHPVGYSYYATLRKKLHWNEHASNEDDTAS.

Aspartate 75 (proton acceptor) is an active-site residue. Residues aspartate 75–glycine 76, asparagine 149–aspartate 150, arginine 177, aspartate 179, threonine 190–serine 195, alanine 214, and glutamine 248 contribute to the NAD(+) site.

The protein belongs to the NAD kinase family. It depends on a divalent metal cation as a cofactor.

The protein resides in the cytoplasm. It catalyses the reaction NAD(+) + ATP = ADP + NADP(+) + H(+). Functionally, involved in the regulation of the intracellular balance of NAD and NADP, and is a key enzyme in the biosynthesis of NADP. Catalyzes specifically the phosphorylation on 2'-hydroxyl of the adenosine moiety of NAD to yield NADP. This chain is NAD kinase, found in Burkholderia ambifaria (strain MC40-6).